Reading from the N-terminus, the 87-residue chain is Small ribosomal subunit protein uS17 (87 aa).

The protein belongs to the universal ribosomal protein uS17 family. In terms of assembly, part of the 30S ribosomal subunit.

One of the primary rRNA binding proteins, it binds specifically to the 5'-end of 16S ribosomal RNA. The protein is Small ribosomal subunit protein uS17 of Bacillus cytotoxicus (strain DSM 22905 / CIP 110041 / 391-98 / NVH 391-98).